We begin with the raw amino-acid sequence, 159 residues long: 3-hydroxyacyl-[acyl-carrier-protein] dehydratase FabZ (159 aa).

His-58 is a catalytic residue.

This sequence belongs to the thioester dehydratase family. FabZ subfamily.

It localises to the cytoplasm. The catalysed reaction is a (3R)-hydroxyacyl-[ACP] = a (2E)-enoyl-[ACP] + H2O. In terms of biological role, involved in unsaturated fatty acids biosynthesis. Catalyzes the dehydration of short chain beta-hydroxyacyl-ACPs and long chain saturated and unsaturated beta-hydroxyacyl-ACPs. The chain is 3-hydroxyacyl-[acyl-carrier-protein] dehydratase FabZ from Helicobacter pylori (strain HPAG1).